The sequence spans 240 residues: LexA repressor (240 aa).

A DNA-binding region (H-T-H motif) is located at residues 26-46 (FDEMKEALDLASKSGIHRLIT). Catalysis depends on for autocatalytic cleavage activity residues serine 161 and lysine 199.

It belongs to the peptidase S24 family. As to quaternary structure, homodimer.

It catalyses the reaction Hydrolysis of Ala-|-Gly bond in repressor LexA.. Functionally, represses a number of genes involved in the response to DNA damage (SOS response), including recA and lexA. In the presence of single-stranded DNA, RecA interacts with LexA causing an autocatalytic cleavage which disrupts the DNA-binding part of LexA, leading to derepression of the SOS regulon and eventually DNA repair. This Brucella melitensis biotype 1 (strain ATCC 23456 / CCUG 17765 / NCTC 10094 / 16M) protein is LexA repressor.